The sequence spans 132 residues: Small ribosomal subunit protein uS8 (132 aa).

This sequence belongs to the universal ribosomal protein uS8 family. Part of the 30S ribosomal subunit. Contacts proteins S5 and S12.

Functionally, one of the primary rRNA binding proteins, it binds directly to 16S rRNA central domain where it helps coordinate assembly of the platform of the 30S subunit. In Streptococcus agalactiae serotype Ia (strain ATCC 27591 / A909 / CDC SS700), this protein is Small ribosomal subunit protein uS8.